Consider the following 216-residue polypeptide: MNLILMGLPGAGKGTQAEQIVAKYNIPHISTGDMFRAAMKAETEMGLQAKSFIDKGALVPDEVTIGIVRERLSQEDCVRGFLLDGFPRTVAQASALEEIMKDLGKKIDYVLNINVDSGLLLKRLTGRRICKECGATYHLEFNPPAKADVCDKCGGELYQRSDDNEETVANRLDVNIKQTKPLLDFYDELGYLKSINGEQDINKVFADIDVLIGGLA.

Residue 10–15 (GAGKGT) coordinates ATP. The segment at 30 to 59 (STGDMFRAAMKAETEMGLQAKSFIDKGALV) is NMP. Residues T31, R36, 57–59 (ALV), 85–88 (GFPR), and Q92 contribute to the AMP site. Residues 126 to 163 (GRRICKECGATYHLEFNPPAKADVCDKCGGELYQRSDD) form an LID region. R127 is a binding site for ATP. C130 and C133 together coordinate Zn(2+). ATP is bound at residue 136–137 (TY). The Zn(2+) site is built by C150 and C153. AMP-binding residues include R160 and R171. Q199 is a binding site for ATP.

The protein belongs to the adenylate kinase family. In terms of assembly, monomer.

It localises to the cytoplasm. It catalyses the reaction AMP + ATP = 2 ADP. It functions in the pathway purine metabolism; AMP biosynthesis via salvage pathway; AMP from ADP: step 1/1. In terms of biological role, catalyzes the reversible transfer of the terminal phosphate group between ATP and AMP. Plays an important role in cellular energy homeostasis and in adenine nucleotide metabolism. The protein is Adenylate kinase of Bacillus cereus (strain G9842).